The primary structure comprises 89 residues: Small ribosomal subunit protein uS15 (89 aa).

Residues 1-10 are compositionally biased toward basic and acidic residues; it reads MPLNTEKKQE. The interval 1 to 22 is disordered; it reads MPLNTEKKQELINSHQTHATDT. The span at 11-22 shows a compositional bias: polar residues; it reads LINSHQTHATDT.

This sequence belongs to the universal ribosomal protein uS15 family. As to quaternary structure, part of the 30S ribosomal subunit. Forms a bridge to the 50S subunit in the 70S ribosome, contacting the 23S rRNA.

One of the primary rRNA binding proteins, it binds directly to 16S rRNA where it helps nucleate assembly of the platform of the 30S subunit by binding and bridging several RNA helices of the 16S rRNA. Functionally, forms an intersubunit bridge (bridge B4) with the 23S rRNA of the 50S subunit in the ribosome. This chain is Small ribosomal subunit protein uS15, found in Synechococcus sp. (strain RCC307).